We begin with the raw amino-acid sequence, 552 residues long: Serine/threonine-protein kinase RIO2 (552 aa).

One can recognise a Protein kinase domain in the interval 97-272 (VGNQMGVGKE…DRDVKCIKDF (176 aa)). K123 is an ATP binding site. D228 acts as the Proton acceptor in catalysis. Phosphoserine is present on residues S332, S335, S337, S350, S362, S380, S382, S385, and S390. The Nuclear export signal signature appears at 399–408 (ALEEIKGQVV). A phosphoserine mark is found at S412, S417, and S442. Phosphotyrosine is present on Y445. Phosphoserine is present on S548.

Belongs to the protein kinase superfamily. RIO-type Ser/Thr kinase family. Associated with late 40S pre-ribosomal particles. Interacts with PLK1 (via its N-terminus). Mg(2+) serves as cofactor. In terms of processing, autophosphorylated (in vitro). Phosphorylation at Ser-335, Ser-380, Ser-548 by PLK1 affects the timing of the metaphase-anaphase transition.

The protein resides in the cytoplasm. The enzyme catalyses L-seryl-[protein] + ATP = O-phospho-L-seryl-[protein] + ADP + H(+). It carries out the reaction L-threonyl-[protein] + ATP = O-phospho-L-threonyl-[protein] + ADP + H(+). Serine/threonine-protein kinase involved in the final steps of cytoplasmic maturation of the 40S ribosomal subunit. Involved in export of the 40S pre-ribosome particles (pre-40S) from the nucleus to the cytoplasm. Its kinase activity is required for the release of NOB1, PNO1 and LTV1 from the late pre-40S and the processing of 18S-E pre-rRNA to the mature 18S rRNA. Regulates the timing of the metaphase-anaphase transition during mitotic progression, and its phosphorylation, most likely by PLK1, regulates this function. The polypeptide is Serine/threonine-protein kinase RIO2 (Homo sapiens (Human)).